The chain runs to 250 residues: L-cystine transport system ATP-binding protein TcyN (250 aa).

The ABC transporter domain maps to 4 to 244 (IEVKNLVKKF…PEQPRTRQFL (241 aa)). 36-43 (GPSGSGKT) provides a ligand contact to ATP.

This sequence belongs to the ABC transporter superfamily. In terms of assembly, the complex is composed of two ATP-binding proteins (TcyN), two transmembrane proteins (TcyL) and a solute-binding protein (TcyJ).

Its subcellular location is the cell inner membrane. The enzyme catalyses L-cystine(out) + ATP + H2O = L-cystine(in) + ADP + phosphate + H(+). It catalyses the reaction D-cystine(out) + ATP + H2O = D-cystine(in) + ADP + phosphate + H(+). With respect to regulation, the TcyJLN system is inhibited by L-cystine, L-cysteine, DL-2,6-diaminopimelic acid and L-cystathionine, and is stimulated by D-cysteine. Functionally, part of the ABC transporter complex TcyJLN involved in L-cystine import. This high affinity cystine transporter is involved in resistance to oxidative stress by forming a L-cysteine/L-cystine shuttle system with the EamA transporter, which exports L-cysteine as reducing equivalents to the periplasm to prevent the cells from oxidative stress. Exported L-cysteine can reduce the periplasmic hydrogen peroxide to water, and then generated L-cystine is imported back into the cytoplasm via the TcyJLN complex. Functions at low cystine concentrations. The system can also transport L-cysteine, diaminopimelic acid (DAP), djenkolate, lanthionine, D-cystine, homocystine, and it mediates accumulation of the toxic compounds L-selenaproline (SCA) and L-selenocystine (SeCys). Could also facilitate threonine efflux. Responsible for energy coupling to the transport system. The chain is L-cystine transport system ATP-binding protein TcyN from Escherichia coli (strain K12).